Consider the following 935-residue polypeptide: Protein translocase subunit SecA (935 aa).

ATP contacts are provided by residues Gln90, 108–112 (GEGKT), and Asp504.

It belongs to the SecA family. As to quaternary structure, monomer and homodimer. Part of the essential Sec protein translocation apparatus which comprises SecA, SecYEG and auxiliary proteins SecDF. Other proteins may also be involved.

It is found in the cell inner membrane. Its subcellular location is the cellular thylakoid membrane. The protein resides in the cytoplasm. It carries out the reaction ATP + H2O + cellular proteinSide 1 = ADP + phosphate + cellular proteinSide 2.. Its function is as follows. Part of the Sec protein translocase complex. Interacts with the SecYEG preprotein conducting channel. Has a central role in coupling the hydrolysis of ATP to the transfer of proteins into and across the cell membrane, serving as an ATP-driven molecular motor driving the stepwise translocation of polypeptide chains across the membrane. Functionally, probably participates in protein translocation into and across both the cytoplasmic and thylakoid membranes in cyanobacterial cells. This chain is Protein translocase subunit SecA, found in Gloeothece citriformis (strain PCC 7424) (Cyanothece sp. (strain PCC 7424)).